A 250-amino-acid polypeptide reads, in one-letter code: Homeobox protein DLL-1 (250 aa).

Disordered stretches follow at residues 40–66 and 84–106; these read YPSL…SGSN and SPYL…PDQQ. The span at 84–98 shows a compositional bias: polar residues; sequence SPYLQSCNSNTTTQS. Residues 125–184 constitute a DNA-binding region (homeobox); that stretch reads IRKPRTIYSSLQLQALNHRFQQTQYLALPERAELAASLGVTQTQVKIWFQNKRSKYKKLI.

It belongs to the distal-less homeobox family.

It localises to the nucleus. The protein is Homeobox protein DLL-1 (dll1) of Xenopus laevis (African clawed frog).